A 147-amino-acid chain; its full sequence is MEKYNREEFEEVIVDIGRVTKVVKGGRRFRFTALVVVGNRNGLVGFGYGKAKEVPDAMRKAIDDAFKNIIHVKIKGTTIPHDVEVKYNASRMLLRPASEGTGVIAGGSARPIIELAGIKDILTKSLGSNNSANVVRATIKALSLLKS.

An S5 DRBM domain is found at 9 to 72 (FEEVIVDIGR…DDAFKNIIHV (64 aa)).

This sequence belongs to the universal ribosomal protein uS5 family. Part of the 30S ribosomal subunit. Contacts proteins S4 and S8.

In terms of biological role, with S4 and S12 plays an important role in translational accuracy. Located at the back of the 30S subunit body where it stabilizes the conformation of the head with respect to the body. This chain is Small ribosomal subunit protein uS5, found in Campylobacter concisus (strain 13826).